The primary structure comprises 368 residues: Phosphate acyltransferase (368 aa).

It belongs to the PlsX family. In terms of assembly, homodimer. Probably interacts with PlsY.

The protein localises to the cytoplasm. The enzyme catalyses a fatty acyl-[ACP] + phosphate = an acyl phosphate + holo-[ACP]. Its pathway is lipid metabolism; phospholipid metabolism. Functionally, catalyzes the reversible formation of acyl-phosphate (acyl-PO(4)) from acyl-[acyl-carrier-protein] (acyl-ACP). This enzyme utilizes acyl-ACP as fatty acyl donor, but not acyl-CoA. The polypeptide is Phosphate acyltransferase (Cereibacter sphaeroides (strain ATCC 17025 / ATH 2.4.3) (Rhodobacter sphaeroides)).